Here is a 395-residue protein sequence, read N- to C-terminus: Inactive serine protease 54 (395 aa).

A signal peptide spans 1 to 30 (MVSAAGLSGDGKMRGVLLVLLGLLYSSTSC). Residues 37 to 269 (VFYGPDPKEG…YSKWITSKAE (233 aa)) form the Peptidase S1 domain. N-linked (GlcNAc...) asparagine glycosylation is present at asparagine 123. Disulfide bonds link cysteine 164–cysteine 227, cysteine 195–cysteine 205, and cysteine 217–cysteine 248. Residues 324 to 348 (RLGNSSRDSLDVREKDVKESGRSPE) are disordered. An N-linked (GlcNAc...) asparagine glycan is attached at asparagine 327. Residues 331–345 (DSLDVREKDVKESGR) are compositionally biased toward basic and acidic residues.

It belongs to the peptidase S1 family. Plasma kallikrein subfamily.

It is found in the secreted. The polypeptide is Inactive serine protease 54 (PRSS54) (Homo sapiens (Human)).